An 804-amino-acid polypeptide reads, in one-letter code: Probable phosphoketolase (804 aa).

The protein belongs to the XFP family. Thiamine diphosphate is required as a cofactor.

The polypeptide is Probable phosphoketolase (Mycolicibacterium paratuberculosis (strain ATCC BAA-968 / K-10) (Mycobacterium paratuberculosis)).